The chain runs to 215 residues: Charged multivesicular body protein 4 (215 aa).

Residues 10–173 (KQDTQETIGK…QEELDAQLLN (164 aa)) are a coiled coil.

The protein belongs to the SNF7 family. Probable core component of the endosomal sorting required for transport complex III (ESCRT-III). ESCRT-III components are thought to multimerize to form a flat lattice on the perimeter membrane of the endosome.

It localises to the cytoplasmic vesicle membrane. The protein resides in the late endosome membrane. Probable core component of the endosomal sorting required for transport complex III (ESCRT-III) which is involved in multivesicular bodies (MVBs) formation and sorting of endosomal cargo proteins into MVBs. MVBs contain intraluminal vesicles (ILVs) that are generated by invagination and scission from the limiting membrane of the endosome and mostly are delivered to lysosomes enabling degradation of membrane proteins. This chain is Charged multivesicular body protein 4 (chmp4), found in Dictyostelium discoideum (Social amoeba).